A 232-amino-acid polypeptide reads, in one-letter code: Modulator of macroautophagy TMEM150B (232 aa).

Residues 1–6 (MWAWAL) are Cytoplasmic-facing. A helical transmembrane segment spans residues 7 to 27 (LPVFLAVFGTVGLWAVYAIAV). The Extracellular segment spans residues 28–50 (SNNSVNITIEFPYISTCGAYTPQ). 2 N-linked (GlcNAc...) asparagine glycosylation sites follow: N29 and N33. The chain crosses the membrane as a helical span at residues 51-71 (SCLFAQICNICCVLALWIVVI). Residues 72-83 (RFQQIRDLGRSS) are Cytoplasmic-facing. Residues 84 to 104 (HLNTAGLVLGFISSIGISILG) traverse the membrane as a helical segment. At 105–115 (NFQQTIIQEVH) the chain is on the extracellular side. Residues 116 to 136 (LLGALMAFFLGLAYFWIQAFI) traverse the membrane as a helical segment. The Cytoplasmic segment spans residues 137–153 (TYFSPPSRDNKWLVPVR). A helical membrane pass occupies residues 154 to 174 (FVLCSQCTCMVICMFVLHSTG). Over 175–177 (FRS) the chain is Extracellular. A helical transmembrane segment spans residues 178–198 (AAAICEWILVMCFFALFGVFA). Residues 199-232 (AEFRHIDFHKLTVQKEGLKVANNDNVVWTVQDVQ) are Cytoplasmic-facing.

Belongs to the DRAM/TMEM150 family.

The protein resides in the cell membrane. The protein localises to the endosome membrane. It localises to the cytoplasmic vesicle. Its subcellular location is the autophagosome membrane. Its function is as follows. Modulator of macroautophagy that causes accumulation of autophagosomes under basal conditions and enhances autophagic flux. Represses cell death and promotes long-term clonogenic survival of cells grown in the absence of glucose in a macroautophagy-independent manner. May have some role in extracellular matrix engulfment or growth factor receptor recycling, both of which can modulate cell survival. This Danio rerio (Zebrafish) protein is Modulator of macroautophagy TMEM150B.